Reading from the N-terminus, the 72-residue chain is Translation initiation factor IF-1 (72 aa).

The S1-like domain occupies 1-72; sequence MSKSDIIEMQ…TRGRITWRAK (72 aa).

It belongs to the IF-1 family. In terms of assembly, component of the 30S ribosomal translation pre-initiation complex which assembles on the 30S ribosome in the order IF-2 and IF-3, IF-1 and N-formylmethionyl-tRNA(fMet); mRNA recruitment can occur at any time during PIC assembly.

The protein resides in the cytoplasm. In terms of biological role, one of the essential components for the initiation of protein synthesis. Stabilizes the binding of IF-2 and IF-3 on the 30S subunit to which N-formylmethionyl-tRNA(fMet) subsequently binds. Helps modulate mRNA selection, yielding the 30S pre-initiation complex (PIC). Upon addition of the 50S ribosomal subunit IF-1, IF-2 and IF-3 are released leaving the mature 70S translation initiation complex. The sequence is that of Translation initiation factor IF-1 from Clostridium perfringens (strain 13 / Type A).